The chain runs to 114 residues: Iron-sulfur cluster insertion protein ErpA (114 aa).

Residues cysteine 42, cysteine 106, and cysteine 108 each contribute to the iron-sulfur cluster site.

It belongs to the HesB/IscA family. Homodimer. It depends on iron-sulfur cluster as a cofactor.

Required for insertion of 4Fe-4S clusters for at least IspG. This Proteus mirabilis (strain HI4320) protein is Iron-sulfur cluster insertion protein ErpA.